Here is a 113-residue protein sequence, read N- to C-terminus: Sensorin-A (113 aa).

A signal peptide spans 1 to 32; the sequence is MPSRAATSPLNVQMMVVLCIVCLALQAVAANA. Phe-54 carries the phenylalanine amide modification. The propeptide occupies 58-113; sequence SSSETYSTNLINLLSRQLVSQEELRAILEKQPILLDEVVKILDRNDDGYITVADLL. In terms of domain architecture, EF-hand spans 87 to 113; sequence KQPILLDEVVKILDRNDDGYITVADLL. 5 residues coordinate Ca(2+): Asp-100, Asn-102, Asp-104, Tyr-106, and Asp-111.

In terms of tissue distribution, seems to be specific to the mechanosensory neurons of the central nervous system.

It localises to the secreted. Its function is as follows. May function as an inhibitory cotransmitter acting in conjunction with the fast excitatory transmitter released by sensory neurons. The peptide selectively inhibits certain postsynaptic cells probably by means of sensorin A release. This Aplysia californica (California sea hare) protein is Sensorin-A (PSC1).